The following is a 175-amino-acid chain: Putative lipoprotein LppN (175 aa).

The first 20 residues, 1–20 (MRLPGRHVLYALSAVTMLAA), serve as a signal peptide directing secretion. Cys-21 carries N-palmitoyl cysteine lipidation. Cys-21 is lipidated: S-diacylglycerol cysteine. The interval 31-56 (ASTNMNPTNPPATAETATVSPTPAPQ) is disordered. Low complexity predominate over residues 33–48 (TNMNPTNPPATAETAT). 3 prevents bacterial uptake by a human macrophage-like cell line regions span residues 61–80 (ETWI…PADL), 101–120 (RAPV…DCAA), and 121–140 (GFAP…VAYL).

The protein resides in the cell membrane. Its subcellular location is the cell surface. Functionally, probably involved in bacterial recognition and uptake by its host (human). This is Putative lipoprotein LppN (lppN) from Mycobacterium tuberculosis (strain ATCC 25618 / H37Rv).